The chain runs to 1082 residues: Protein SPT23 (1082 aa).

Disordered regions lie at residues 315–346, 376–417, and 457–476; these read NASNTTTPTSTSNAQVSPMTNDTRSFSSPQSD, NNNN…FSDI, and ASARHTGKRQRSVNEPFMST. Residues 316–328 show a composition bias toward low complexity; it reads ASNTTTPTSTSNA. The segment covering 329-346 has biased composition (polar residues); the sequence is QVSPMTNDTRSFSSPQSD. Low complexity-rich tracts occupy residues 376-391 and 399-416; these read NNNNDNDNKNNIKTNT and HFPSPNSSSEDSNHSFSD. Ser468 carries the post-translational modification Phosphoserine. In terms of domain architecture, IPT/TIG spans 508 to 585; that stretch reads PSIQRVIPAQ…DPSETSMRNN (78 aa). ANK repeat units lie at residues 709–738 and 742–771; these read RGRTLLHLAAFNNWYSLVSLLIKYGSHLND and FGFTPLHMACINGDLRIIRLLLECNVNIMK.

Functionally, dosage-dependent suppressor of Ty-induced promoter mutations. May exert its suppression effect through protein-protein interactions since does not present any of the motifs generally found in transcriptional activators or DNA binding proteins. The chain is Protein SPT23 (SPT23) from Saccharomyces cerevisiae (strain ATCC 204508 / S288c) (Baker's yeast).